The chain runs to 201 residues: MPVPIVIESTGRAERAYDIYSRLLKDRIVLLGTPIDDQVASLICAQLLFLESENPEKEIHMYINSPGGSVTAGMAIYDTMQYINSPVSTLCMGQAASMGALLLAAGAPGLRFSLPHSRIMIHQPSGGFQGQATDIDIQAREVLRLKQSLNAIMSQHTGKPLEQVALDTERDYFMGPEEAQAYGLIDRVLTSRSEATDTISK.

Catalysis depends on serine 97, which acts as the Nucleophile. The active site involves histidine 122.

The protein belongs to the peptidase S14 family. In terms of assembly, fourteen ClpP subunits assemble into 2 heptameric rings which stack back to back to give a disk-like structure with a central cavity, resembling the structure of eukaryotic proteasomes.

Its subcellular location is the cytoplasm. The catalysed reaction is Hydrolysis of proteins to small peptides in the presence of ATP and magnesium. alpha-casein is the usual test substrate. In the absence of ATP, only oligopeptides shorter than five residues are hydrolyzed (such as succinyl-Leu-Tyr-|-NHMec, and Leu-Tyr-Leu-|-Tyr-Trp, in which cleavage of the -Tyr-|-Leu- and -Tyr-|-Trp bonds also occurs).. Its function is as follows. Cleaves peptides in various proteins in a process that requires ATP hydrolysis. Has a chymotrypsin-like activity. Plays a major role in the degradation of misfolded proteins. The sequence is that of ATP-dependent Clp protease proteolytic subunit from Nitratidesulfovibrio vulgaris (strain ATCC 29579 / DSM 644 / CCUG 34227 / NCIMB 8303 / VKM B-1760 / Hildenborough) (Desulfovibrio vulgaris).